Here is a 128-residue protein sequence, read N- to C-terminus: Small ribosomal subunit protein uS14m (128 aa).

It belongs to the universal ribosomal protein uS14 family. Component of the mitochondrial small ribosomal subunit (mt-SSU). Mature mammalian 55S mitochondrial ribosomes consist of a small (28S) and a large (39S) subunit. The 28S small subunit contains a 12S ribosomal RNA (12S mt-rRNA) and 30 different proteins. The 39S large subunit contains a 16S rRNA (16S mt-rRNA), a copy of mitochondrial valine transfer RNA (mt-tRNA(Val)), which plays an integral structural role, and 52 different proteins. Interacts with LIAT1.

The protein resides in the mitochondrion. This chain is Small ribosomal subunit protein uS14m, found in Homo sapiens (Human).